Here is a 541-residue protein sequence, read N- to C-terminus: Zinc finger protein 513 (541 aa).

The disordered stretch occupies residues 1–120 (MPRRKQSHPQ…ARGERPGPAC (120 aa)). The segment covering 44–55 (LEFEEEEEEEEG) has biased composition (acidic residues). Serine 85 and serine 96 each carry phosphoserine. The segment covering 103 to 115 (EPARGPGEARGER) has biased composition (basic and acidic residues). 8 consecutive C2H2-type zinc fingers follow at residues 150–172 (YSCR…MQTH), 178–200 (FRCG…TRTH), 206–228 (YRCP…QRTH), 360–382 (FACS…MKTH), 388–410 (FRCA…QRVH), 416–438 (YKCP…GRIH), 444–466 (FRCS…MLRH), and 472–494 (FRCA…QKVH). The disordered stretch occupies residues 492–541 (KVHGHGGAGGPGLSAPEGWAPPHSPPSVLSTRGSAALGATGSRALHTDSP).

Belongs to the krueppel C2H2-type zinc-finger protein family. Binds DNA. Can associate with the proximal promoter regions of PAX6 and SP4, and their known targets including ARR3, RHO, OPN1MW2 and OPN1SW.

The protein localises to the nucleus. Transcriptional regulator that plays a role in retinal development and maintenance. This Rattus norvegicus (Rat) protein is Zinc finger protein 513 (Znf513).